Consider the following 599-residue polypeptide: Kelch-like protein 41a (599 aa).

The 71-residue stretch at 32-102 (VDCILKVGDR…LYSADIDITD (71 aa)) folds into the BTB domain. Residues 137–239 (CLAIFRMGLV…PEKYLKEKVE (103 aa)) form the BACK domain. 5 Kelch repeats span residues 339–391 (LLYV…EFEN), 393–440 (LFAV…SQNG), 441–488 (LVYC…VHKG), 489–535 (KIVV…SVDG), and 537–591 (LYAV…SMRL).

The protein localises to the cytoplasm. Its subcellular location is the cytoskeleton. The protein resides in the sarcoplasmic reticulum membrane. It localises to the endoplasmic reticulum membrane. In terms of biological role, involved in skeletal muscle development and differentiation. This is Kelch-like protein 41a (klhl41a) from Danio rerio (Zebrafish).